Reading from the N-terminus, the 455-residue chain is MFS-type transporter SLC18B1 (455 aa).

M1 carries the post-translational modification N-acetylmethionine. The disordered stretch occupies residues 1-26; that stretch reads MDTAGPPAPAGTEGDGPGGSTGETSR. Residues 1-32 are Cytoplasmic-facing; it reads MDTAGPPAPAGTEGDGPGGSTGETSRRLSKEQ. S20 is modified (phosphoserine). Residues 33-53 form a helical membrane-spanning segment; that stretch reads IFVLVSAASMNLGCMMTYSIL. At 54–69 the chain is on the extracellular side; it reads GPFFPKEAEKKGASNT. A helical transmembrane segment spans residues 70–90; sequence TIGMIFGCYALFELLASLVFG. Over 91 to 99 the chain is Cytoplasmic; it reads KYLVHIGAK. A helical transmembrane segment spans residues 100–120; it reads FMFIAGMFVSGGVTILFGVLD. The Extracellular portion of the chain corresponds to 121–126; it reads QLPEGP. Residues 127–147 traverse the membrane as a helical segment; it reads IFIAMCFLVRIVDAIGFGAAI. Over 148–166 the chain is Cytoplasmic; it reads TASSSILAKAFPNNVATVM. A helical transmembrane segment spans residues 167–187; that stretch reads GSLEVFSGLGLVAGPPLGGLL. Over 188–194 the chain is Extracellular; that stretch reads YQSFGYE. A helical membrane pass occupies residues 195-215; the sequence is VPFIFLGCIVLLMIPLNLCIL. Residues 216–232 lie on the Cytoplasmic side of the membrane; sequence PSYESDAGKQSFWKLVT. The helical transmembrane segment at 233 to 253 threads the bilayer; that stretch reads LPKIGLIAFVIISLSSCFGFL. The Extracellular portion of the chain corresponds to 254–271; that stretch reads DPTLSLFVMKKFSLSTGY. A helical membrane pass occupies residues 272 to 292; sequence VGLVFLGLSLSYAISSPLFGL. Topologically, residues 293–303 are cytoplasmic; it reads LSDKMPNLRKW. A helical membrane pass occupies residues 304–324; it reads FLVFGNLITAGCYMLLGPIPL. Residues 325–330 are Extracellular-facing; it reads LHIKSQ. A helical transmembrane segment spans residues 331 to 351; that stretch reads LWLLVLVLVINGVSAGMSIIP. At 352–376 the chain is on the cytoplasmic side; that stretch reads TFPEMLSCAYANGFEDGISTLGLVS. The helical transmembrane segment at 377 to 397 threads the bilayer; sequence GLFGAMWSVGAFMGPILGGFL. At 398–406 the chain is on the extracellular side; it reads CEKIGFEWA. A helical transmembrane segment spans residues 407–427; that stretch reads AAIQGLWTLLSGVAMALFYLW. Over 428 to 455 the chain is Cytoplasmic; the sequence is EDSTMRRSKAQNILGTEEEQAALLPNDT.

In terms of tissue distribution, expressed in brain structures, particularly in hippocampus, cortex, and cerebellum (at protein level). Expressed in astrocytes and hippocampal neurons (at protein level). Expressed in peritoneal mast cells.

The protein resides in the cytoplasmic vesicle. The protein localises to the secretory vesicle membrane. Its subcellular location is the secretory vesicle. It localises to the synaptic vesicle membrane. The enzyme catalyses spermine(in) + n H(+)(out) = spermine(out) + n H(+)(in). It carries out the reaction spermidine(in) + n H(+)(out) = spermidine(out) + n H(+)(in). It catalyses the reaction serotonin(in) + n H(+)(out) = serotonin(out) + n H(+)(in). In terms of biological role, proton-coupled polyamine antiporter involved in the translocation of polyamines from cytosol into secretory vesicles prior to their release via exocytosis. Uses the electrochemical proton gradient generated by a V-type proton-pumping ATPase to couple the efflux of protons with the uptake of a polyamine molecule. Facilitates vesicular storage of spermine and spermidine in astrocytes with an impact on glutamatergic neuronal transmission and memory formation. Upon antigen stimulation, regulates polyamine accumulation and release in mast cell secretory granules, which in turn potentiates mast cell degranulation and histamine secretion. The polypeptide is MFS-type transporter SLC18B1 (Rattus norvegicus (Rat)).